The following is a 178-amino-acid chain: MTQLSSNDVPSMGRRQFMNLLTFGTATGVALGALYPVANYFMPLRAGGGGGGTSAKDELGNPVTKTGWLANHQAGDRSLVQGLKGDPTYLIVNSEGDIGEFGLNAICTHLGCVVPWDSGANKFICPCHGSQYDTNGKVVRGPAPLSLALAHVDVDDDAVLVKQWSETDFRTNENPWWA.

A helical transmembrane segment spans residues 20–42 (LLTFGTATGVALGALYPVANYFM). Positions 65–161 (KTGWLANHQA…VDVDDDAVLV (97 aa)) constitute a Rieske domain. [2Fe-2S] cluster is bound by residues Cys107, His109, Cys125, and His128. Residues Cys112 and Cys127 are joined by a disulfide bond.

It belongs to the Rieske iron-sulfur protein family. In terms of assembly, the 4 large subunits of the cytochrome b6-f complex are cytochrome b6, subunit IV (17 kDa polypeptide, PetD), cytochrome f and the Rieske protein, while the 4 small subunits are PetG, PetL, PetM and PetN. The complex functions as a dimer. The cofactor is [2Fe-2S] cluster.

It localises to the cellular thylakoid membrane. It carries out the reaction 2 oxidized [plastocyanin] + a plastoquinol + 2 H(+)(in) = 2 reduced [plastocyanin] + a plastoquinone + 4 H(+)(out). Functionally, component of the cytochrome b6-f complex, which mediates electron transfer between photosystem II (PSII) and photosystem I (PSI), cyclic electron flow around PSI, and state transitions. The polypeptide is Cytochrome b6-f complex iron-sulfur subunit (Prochlorococcus marinus (strain MIT 9515)).